A 637-amino-acid chain; its full sequence is Interleukin-17 receptor E (637 aa).

A signal peptide spans 1–24; that stretch reads MGSPRLAALLLSQPLLFICLAVSA. The Extracellular portion of the chain corresponds to 25–415; it reads QVACPCLPRW…LCPDVSHRHL (391 aa). N-linked (GlcNAc...) asparagine glycosylation is found at asparagine 278 and asparagine 307. A helical transmembrane segment spans residues 416-436; that stretch reads GLLILALLGLTTLLGVVLVLF. Residues 437-637 are Cytoplasmic-facing; sequence CRRLLPGPGR…TNSPCGFSCL (201 aa). Residues 447–583 enclose the SEFIR domain; the sequence is TRPVLLLHAA…LLRDLPRLLR (137 aa).

In terms of assembly, forms heterodimers with IL17RE; the heterodimer binds IL17C.

It localises to the cell membrane. Its function is as follows. Specific functional receptor for IL17C, signaling through the NF-kappa-B and MAPK pathways. Requires TRAF3IP2 /ACT1 for signaling. Crucial regulator in innate immunity to bacterial pathogens. The polypeptide is Interleukin-17 receptor E (Il17re) (Rattus norvegicus (Rat)).